Reading from the N-terminus, the 1000-residue chain is MRALAQRSDRRLLLLVVLSVMILETVTNQDLPVIKCVLISHENNGSSAGKPSSYRMVRGSPEDLQCTPRRQSEGTVYEAATVEVAESGSITLQVQLATPGDLSCLWVFKHSSLGCQPHFDLQNRGIVSMAILNVTETQAGEYLLHIQSEAANYTVLFTVNVRDTQLYVLRRPYFRKMENQDALLCISEGVPEPTVEWVLCSSHRESCKEEGPAVVRKEEKVLHELFGTDIRCCARNALGRESTKLFTIDLNQAPQSTLPQLFLKVGEPLWIRCKAIHVNHGFGLTWELEDKALEEGSYFEMSTYSTNRTMIRILLAFVSSVGRNDTGYYTCSSSKHPSQSALVTILEKGFINATSSQEEYEIDPYEKFCFSVRFKAYPRIRCTWIFSQASFPCEQRGLEDGYSISKFCDHKNKPGEYIFYAENDDAQFTKMFTLNIRKKPQVLANASASQASCSSDGYPLPSWTWKKCSDKSPNCTEEIPEGVWNKKANRKVFGQWVSSSTLNMSEAGKGLLVKCCAYNSMGTSCETIFLNSPGPFPFIQDNISFYATIGLCLPFIVVLIVLICHKYKKQFRYESQLQMIQVTGPLDNEYFYVDFRDYEYDLKWEFPRENLEFGKVLGSGAFGRVMNATAYGISKTGVSIQVAVKMLKEKADSCEKEALMSELKMMTHLGHHDNIVNLLGACTLSGPVYLIFEYCCYGDLLNYLRSKREKFHRTWTEIFKEHNFSFYPTFQAHSNSSMPGSREVQLHPPLDQLSGFNGNSIHSEDEIEYENQKRLAEEEEEDLNVLTFEDLLCFAYQVAKGMEFLEFKSCVHRDLAARNVLVTHGKVVKICDFGLARDILSDSSYVVRGNARLPVKWMAPESLFEGIYTIKSDVWSYGILLWEIFSLGVNPYPGIPVDANFYKLIQSGFKMEQPFYATEGIYFVMQSCWAFDSRKRPSFPNLTSFLGCQLAEAEEAMYQNMGGNVPEHPSIYQNRRPLSREAGSEPPSPQAQVKIHRERS.

Residues 1-27 form the signal peptide; the sequence is MRALAQRSDRRLLLLVVLSVMILETVT. Residues 28-544 are Extracellular-facing; sequence NQDLPVIKCV…PFPFIQDNIS (517 aa). Disulfide bonds link cysteine 36-cysteine 66 and cysteine 104-cysteine 115. Asparagine 44 carries an N-linked (GlcNAc...) asparagine glycan. Positions 45-67 are disordered; that stretch reads GSSAGKPSSYRMVRGSPEDLQCT. Asparagine 133 and asparagine 152 each carry an N-linked (GlcNAc...) asparagine glycan. 2 disulfides stabilise this stretch: cysteine 200-cysteine 207 and cysteine 273-cysteine 331. Residues 254 to 344 form the Ig-like C2-type domain; it reads PQSTLPQLFL…KHPSQSALVT (91 aa). Asparagine 307, asparagine 324, and asparagine 352 each carry an N-linked (GlcNAc...) asparagine glycan. 2 cysteine pairs are disulfide-bonded: cysteine 369-cysteine 408 and cysteine 382-cysteine 393. N-linked (GlcNAc...) asparagine glycosylation is found at asparagine 445, asparagine 474, asparagine 503, and asparagine 542. Residues 545–564 form a helical membrane-spanning segment; that stretch reads FYATIGLCLPFIVVLIVLIC. Residues 565-992 are Cytoplasmic-facing; the sequence is HKYKKQFRYE…GSEPPSPQAQ (428 aa). Tyrosine 573 bears the Phosphotyrosine mark. Position 575 is a phosphoserine (serine 575). Phosphotyrosine; by autocatalysis occurs at positions 590 and 592. An important for normal regulation of the kinase activity and for maintaining the kinase in an inactive state in the absence of ligand binding region spans residues 592–598; that stretch reads YVDFRDY. The residue at position 600 (tyrosine 600) is a Phosphotyrosine. One can recognise a Protein kinase domain in the interval 611-946; the sequence is LEFGKVLGSG…PSFPNLTSFL (336 aa). ATP is bound by residues 617-625 and lysine 645; that span reads LGSGAFGRV. The residue at position 727 (tyrosine 727) is a Phosphotyrosine; by autocatalysis. The residue at position 760 (serine 760) is a Phosphoserine. 2 positions are modified to phosphotyrosine: tyrosine 769 and tyrosine 796. Aspartate 814 acts as the Proton acceptor in catalysis. Phosphotyrosine; by autocatalysis is present on tyrosine 845. Phosphotyrosine occurs at positions 958 and 972. Residues 968–1000 form a disordered region; the sequence is HPSIYQNRRPLSREAGSEPPSPQAQVKIHRERS. A Phosphoserine modification is found at serine 1000.

It belongs to the protein kinase superfamily. Tyr protein kinase family. CSF-1/PDGF receptor subfamily. Monomer in the absence of bound FLT3LG. Homodimer in the presence of bound FLT3LG. Interacts with FIZ1 following ligand activation. Interacts with FES, FER, LYN, FGR, HCK, SRC and GRB2. Interacts with PTPRJ/DEP-1 and PTPN11/SHP2. Interacts with RNF115 and RNF126. N-glycosylated, contains complex N-glycans with sialic acid. Post-translationally, autophosphorylated on several tyrosine residues in response to FLT3LG binding. FLT3LG binding also increases phosphorylation of mutant kinases that are constitutively activated. Dephosphorylated by PTPRJ/DEP-1, PTPN1, PTPN6/SHP-1, and to a lesser degree by PTPN12. Dephosphorylation is important for export from the endoplasmic reticulum and location at the cell membrane. In terms of processing, rapidly ubiquitinated by UBE2L6 and the E3 ubiquitin-protein ligase SIAH1 after autophosphorylation, leading to its proteasomal degradation. In terms of tissue distribution, hematopoietic stem and progenitor cell-enriched populations. Found in brain, placenta and testis.

The protein localises to the membrane. It is found in the endoplasmic reticulum lumen. It carries out the reaction L-tyrosyl-[protein] + ATP = O-phospho-L-tyrosyl-[protein] + ADP + H(+). With respect to regulation, present in an inactive conformation in the absence of bound ligand. FLT3LG binding leads to dimerization and activation by autophosphorylation. Its function is as follows. Tyrosine-protein kinase that acts as a cell-surface receptor for the cytokine FLT3LG and regulates differentiation, proliferation and survival of hematopoietic progenitor cells and of dendritic cells. Promotes phosphorylation of SHC1 and AKT1, and activation of the downstream effector MTOR. Promotes activation of RAS signaling and phosphorylation of downstream kinases, including MAPK1/ERK2 and/or MAPK3/ERK1. Promotes phosphorylation of FES, FER, PTPN6/SHP, PTPN11/SHP-2, PLCG1, and STAT5A and/or STAT5B. Activation of wild-type FLT3 causes only marginal activation of STAT5A or STAT5B. Mutations that cause constitutive kinase activity promote cell proliferation and resistance to apoptosis via the activation of multiple signaling pathways. The chain is Receptor-type tyrosine-protein kinase FLT3 (Flt3) from Mus musculus (Mouse).